The chain runs to 77 residues: MKLIIFTGLVLFAIVSLIEVQADNERACLPQYQVCTDAPGNCCSNLVCDCYGRYKSGARIGRNCFCLQKGVIYKREN.

Positions 1–20 (MKLIIFTGLVLFAIVSLIEV) are cleaved as a signal peptide. Positions 21–26 (QADNER) are excised as a propeptide.

This sequence belongs to the neurotoxin 19 (CSTX) family. 08 (U8-Lctx) subfamily. Post-translationally, contains 4 disulfide bonds. In terms of tissue distribution, expressed by the venom gland.

It is found in the secreted. The sequence is that of U8-lycotoxin-Ls1f from Lycosa singoriensis (Wolf spider).